A 266-amino-acid chain; its full sequence is Ribonuclease HII (266 aa).

The disordered stretch occupies residues 19-38 (HPGMIRDKEKPAPTKPGKGV). One can recognise an RNase H type-2 domain in the interval 58 to 246 (WPVAGCDEAG…VVAARQKHQP (189 aa)). Residues D64, E65, and D155 each coordinate a divalent metal cation.

This sequence belongs to the RNase HII family. Requires Mn(2+) as cofactor. Mg(2+) serves as cofactor.

It localises to the cytoplasm. It carries out the reaction Endonucleolytic cleavage to 5'-phosphomonoester.. Functionally, endonuclease that specifically degrades the RNA of RNA-DNA hybrids. The protein is Ribonuclease HII of Rhodopseudomonas palustris (strain BisB18).